Here is a 502-residue protein sequence, read N- to C-terminus: Myocilin (502 aa).

The N-terminal stretch at 1–31 (MPSCAYCCSCGPKMPALQLLFLACLVWGMGA) is a signal peptide. A coiled-coil region spans residues 82 to 183 (ADLESTKARV…QEVARLRRGQ (102 aa)). The interval 166–198 (ARRLEGSSQEVARLRRGQCPSTHHPSQDMLPGS) is disordered. Asn229 carries N-linked (GlcNAc...) asparagine glycosylation. Positions 242 to 501 (GCGVLMWVGE…MVTYDIKLSE (260 aa)) constitute an Olfactomedin-like domain. Residues Cys243 and Cys431 are joined by a disulfide bond. Ca(2+) contacts are provided by Asp378, Asn426, Ala427, Val475, and Asp476.

Homodimer (via N-terminus). Can also form higher oligomers. Interacts with OLFM3, FN1, NRCAM, GLDN and NFASC. Interacts (via N-terminus) with MYL2. Interacts with SFRP1, FRZB, FZD7, FZD10, FZD1 and WIF1; regulates Wnt signaling. Interacts with SNTA1; regulates muscle hypertrophy. Interacts with ERBB2 and ERBB3; activates ERBB2-ERBB3 signaling pathway. Interacts with SNCG; affects its secretion and its aggregation. Post-translationally, palmitoylated. Undergoes a calcium-dependent proteolytic cleavage at Gln-225 by CAPN2 in the endoplasmic reticulum. The result is the production of two fragments, one of 35 kDa containing the C-terminal olfactomedin-like domain, and another of 20 kDa containing the N-terminal leucine zipper-like domain. In terms of processing, glycosylated. In terms of tissue distribution, highly expressed in skeletal muscle and retina. Also detected at lower levels in thyroid gland but not in other endocrine glands such as the adrenal or pituitary glands.

The protein localises to the secreted. Its subcellular location is the golgi apparatus. The protein resides in the cytoplasmic vesicle. It is found in the extracellular space. It localises to the extracellular matrix. The protein localises to the extracellular exosome. Its subcellular location is the mitochondrion. The protein resides in the mitochondrion intermembrane space. It is found in the mitochondrion inner membrane. It localises to the mitochondrion outer membrane. The protein localises to the rough endoplasmic reticulum. Its subcellular location is the cell projection. The protein resides in the cilium. It is found in the endoplasmic reticulum. Functionally, secreted glycoprotein regulating the activation of different signaling pathways in adjacent cells to control different processes including cell adhesion, cell-matrix adhesion, cytoskeleton organization and cell migration. Promotes substrate adhesion, spreading and formation of focal contacts. Negatively regulates cell-matrix adhesion and stress fiber assembly through Rho protein signal transduction. Modulates the organization of actin cytoskeleton by stimulating the formation of stress fibers through interactions with components of Wnt signaling pathways. Promotes cell migration through activation of PTK2 and the downstream phosphatidylinositol 3-kinase signaling. Plays a role in bone formation and promotes osteoblast differentiation in a dose-dependent manner through mitogen-activated protein kinase signaling. Mediates myelination in the peripheral nervous system through ERBB2/ERBB3 signaling. Plays a role as a regulator of muscle hypertrophy through the components of dystrophin-associated protein complex. Involved in positive regulation of mitochondrial depolarization. Plays a role in neurite outgrowth. May participate in the obstruction of fluid outflow in the trabecular meshwork. The protein is Myocilin (Myoc) of Rattus norvegicus (Rat).